Reading from the N-terminus, the 638-residue chain is Paramyosin (638 aa).

A coiled-coil region spans residues 1 to 638 (FSPSTTRLES…EGDISVMQAD (638 aa)).

The protein belongs to the paramyosin family. As to quaternary structure, homodimer.

It is found in the cytoplasm. Its subcellular location is the myofibril. Paramyosin is a major structural component of many thick filaments isolated from invertebrate muscles. The protein is Paramyosin of Opisthorchis felineus.